Reading from the N-terminus, the 344-residue chain is L-rhamnose-proton symporter (344 aa).

The next 10 helical transmembrane spans lie at 4 to 24, 38 to 58, 68 to 88, 101 to 121, 137 to 157, 175 to 195, 214 to 234, 259 to 279, 290 to 310, and 321 to 341; these read AITM…CFYA, WSVG…ALLL, FNLS…IGNI, MGIG…TPII, TLLG…AGQL, LLLA…MNAA, LPSY…FCFI, ILLS…YAWG, MSWM…GLVL, and VAVL…VGLG.

Belongs to the L-rhamnose transporter (TC 2.A.7.6) family.

It is found in the cell inner membrane. The catalysed reaction is L-rhamnopyranose(in) + H(+)(in) = L-rhamnopyranose(out) + H(+)(out). In terms of biological role, uptake of L-rhamnose across the cytoplasmic membrane with the concomitant transport of protons into the cell (symport system). This is L-rhamnose-proton symporter from Salmonella paratyphi A (strain ATCC 9150 / SARB42).